The following is a 220-amino-acid chain: UPF0319 protein YccT (220 aa).

Residues methionine 1–alanine 20 form the signal peptide.

It belongs to the UPF0319 family.

This is UPF0319 protein YccT from Shigella flexneri serotype 5b (strain 8401).